A 442-amino-acid chain; its full sequence is UDP-glucosyltransferase 29 (442 aa).

The active-site Proton acceptor is the H20. H20 is a binding site for an anthocyanidin. The Charge relay role is filled by D116. Positions 138, 318, 320, 335, 338, 340, 343, 359, and 360 each coordinate UDP-alpha-D-glucose.

The protein belongs to the UDP-glycosyltransferase family. In terms of tissue distribution, expressed at higher levels in roots than in leaves.

It catalyses the reaction (20S)-ginsenoside F2 + UDP-alpha-D-glucose = (20S)-ginsenoside Rd + UDP + H(+). The catalysed reaction is (20S)-ginsenoside Rh2 + UDP-alpha-D-glucose = (20S)-ginsenoside Rg3 + UDP + H(+). Its pathway is secondary metabolite biosynthesis; terpenoid biosynthesis. Functionally, component of the dammarane-type triterpene saponins (e.g. PPD-type ginsenosides or panaxosides) biosynthetic pathway. Glycosyltransferase that catalyzes the conversion of ginsenoside Rh2 to ginsenoside Rg3. Triggers the biosynthesis of ginsenoside Rd from ginsenoside F2. In Panax ginseng (Korean ginseng), this protein is UDP-glucosyltransferase 29.